A 224-amino-acid chain; its full sequence is MNTIDWEFMISAFPTLIQALPITLFMAIAAMIFAIIGGLILALITKNKIPVLHQLSKLYISFFRGVPTLVQLFLIYYGLPQLFPEMSKMTALTAAIIGLSLKNAAYLAEIFRAALNSVDDGQLEACLSVGMTKFQAYRRIILPQAIRNAIPATGNTFIGLLKETSLAFTLGVMEMFAQGKMYASGNLKYFETYLAVAIVYWVLTIIYSILQDLFERAMSKPYRT.

Transmembrane regions (helical) follow at residues 3–23 (TIDW…LPIT), 24–44 (LFMA…LALI), 58–78 (LYIS…IYYG), 91–111 (ALTA…AEIF), 157–177 (FIGL…EMFA), and 190–210 (FETY…YSIL). The region spanning 20–211 (LPITLFMAIA…VLTIIYSILQ (192 aa)) is the ABC transmembrane type-1 domain.

Belongs to the binding-protein-dependent transport system permease family. In terms of assembly, the complex is composed of two ATP-binding proteins (YxeO), two transmembrane proteins (YxeN) and a solute-binding protein (YxeM).

Its subcellular location is the cell membrane. In terms of biological role, probably part of the ABC transporter complex YxeMNO that could be involved in amino-acid import. May transport S-methylcysteine. Probably responsible for the translocation of the substrate across the membrane. The chain is Probable amino-acid permease protein YxeN (yxeN) from Bacillus subtilis (strain 168).